The following is a 370-amino-acid chain: tRNA/tmRNA (uracil-C(5))-methyltransferase (370 aa).

S-adenosyl-L-methionine-binding residues include Q190, Y218, N223, E239, and D299. C324 functions as the Nucleophile in the catalytic mechanism. E358 functions as the Proton acceptor in the catalytic mechanism.

The protein belongs to the class I-like SAM-binding methyltransferase superfamily. RNA M5U methyltransferase family. TrmA subfamily.

It carries out the reaction uridine(54) in tRNA + S-adenosyl-L-methionine = 5-methyluridine(54) in tRNA + S-adenosyl-L-homocysteine + H(+). The catalysed reaction is uridine(341) in tmRNA + S-adenosyl-L-methionine = 5-methyluridine(341) in tmRNA + S-adenosyl-L-homocysteine + H(+). Functionally, dual-specificity methyltransferase that catalyzes the formation of 5-methyluridine at position 54 (m5U54) in all tRNAs, and that of position 341 (m5U341) in tmRNA (transfer-mRNA). The sequence is that of tRNA/tmRNA (uracil-C(5))-methyltransferase from Sodalis glossinidius (strain morsitans).